The sequence spans 510 residues: F-box only protein 15 (510 aa).

An F-box domain is found at 77–117 (MPSEILLKIFSYLDAVSLLCTGCVSRRFYHLANDNFIWIGI).

In terms of assembly, directly interacts with SKP1 and CUL1.

Substrate-recognition component of the SCF (SKP1-CUL1-F-box protein)-type E3 ubiquitin ligase complex. In Homo sapiens (Human), this protein is F-box only protein 15 (FBXO15).